The sequence spans 338 residues: Protein-glutamate methylesterase/protein-glutamine glutaminase 2 (338 aa).

The Response regulatory domain maps to 2-119 (RIGIVNDSAL…SDTKLAAGPL (118 aa)). A 4-aspartylphosphate modification is found at aspartate 53. The CheB-type methylesterase domain maps to 145–330 (PTPTAPRLVA…PLQKIAPRLV (186 aa)). Active-site residues include serine 158, histidine 185, and aspartate 278.

Belongs to the CheB family. In terms of processing, phosphorylated by CheA. Phosphorylation of the N-terminal regulatory domain activates the methylesterase activity.

Its subcellular location is the cytoplasm. It carries out the reaction [protein]-L-glutamate 5-O-methyl ester + H2O = L-glutamyl-[protein] + methanol + H(+). The catalysed reaction is L-glutaminyl-[protein] + H2O = L-glutamyl-[protein] + NH4(+). Its function is as follows. Involved in chemotaxis. Part of a chemotaxis signal transduction system that modulates chemotaxis in response to various stimuli. Catalyzes the demethylation of specific methylglutamate residues introduced into the chemoreceptors (methyl-accepting chemotaxis proteins or MCP) by CheR. Also mediates the irreversible deamidation of specific glutamine residues to glutamic acid. This chain is Protein-glutamate methylesterase/protein-glutamine glutaminase 2, found in Cupriavidus metallidurans (strain ATCC 43123 / DSM 2839 / NBRC 102507 / CH34) (Ralstonia metallidurans).